A 102-amino-acid chain; its full sequence is Co-chaperonin GroES (102 aa).

Belongs to the GroES chaperonin family. Heptamer of 7 subunits arranged in a ring. Interacts with the chaperonin GroEL.

It is found in the cytoplasm. Its function is as follows. Together with the chaperonin GroEL, plays an essential role in assisting protein folding. The GroEL-GroES system forms a nano-cage that allows encapsulation of the non-native substrate proteins and provides a physical environment optimized to promote and accelerate protein folding. GroES binds to the apical surface of the GroEL ring, thereby capping the opening of the GroEL channel. The chain is Co-chaperonin GroES from Chlamydia trachomatis serovar D (strain ATCC VR-885 / DSM 19411 / UW-3/Cx).